Reading from the N-terminus, the 89-residue chain is Small ribosomal subunit protein uS14 (89 aa).

The protein belongs to the universal ribosomal protein uS14 family. Part of the 30S ribosomal subunit. Contacts proteins S3 and S10.

Its function is as follows. Binds 16S rRNA, required for the assembly of 30S particles and may also be responsible for determining the conformation of the 16S rRNA at the A site. This Phytoplasma australiense protein is Small ribosomal subunit protein uS14.